A 288-amino-acid chain; its full sequence is Co-chaperone protein DjlA (288 aa).

Topologically, residues 1–6 (MNFIGK) are periplasmic. The helical transmembrane segment at 7 to 30 (ILGFIIGYRFGGLFGGIAGLILGH) threads the bilayer. The Cytoplasmic segment spans residues 31 to 288 (IADKKLYELG…DLICKVKGWK (258 aa)). One can recognise a J domain in the interval 222–288 (DAYKVLGVNA…DLICKVKGWK (67 aa)).

Homodimer.

The protein localises to the cell inner membrane. In terms of biological role, regulatory DnaK co-chaperone. Direct interaction between DnaK and DjlA is needed for the induction of the wcaABCDE operon, involved in the synthesis of a colanic acid polysaccharide capsule, possibly through activation of the RcsB/RcsC phosphotransfer signaling pathway. The colanic acid capsule may help the bacterium survive conditions outside the host. The protein is Co-chaperone protein DjlA of Mannheimia succiniciproducens (strain KCTC 0769BP / MBEL55E).